Consider the following 471-residue polypeptide: MSPQTETKASVGFKAGVKDYKLTYYTPDYETKDTDILAAFRVTPQPGVPPEEAGAAVAAESSTGTWTTVWTDGLTSLDRYKGRCYHIETVVGEENQYIAYVAYPLDLFEEGSVTNMFTSIVGNVFGFKALRALRLEDLRIPTSYSKTFQGPPHGIQVERDKLNKYGRPLLGCTIKPKLGLSAKNYGRAVYECLRGGLDFTKDDENVNSQPFMRWRDRFLFCTEALYKAQTETGEIKGHYLNATAGTCEEMMKRAVFARELGVPIVMHDYLTGGFTANTSLAHYCRDNGLLLHIHRAMHAVIDRQKNHGMHFRVLAKALRMSGGDHIHAGTVVGKLEGEREMTLGFVDLLRDDFIEKDRSRGIFFTQDWVSMPGVIPVASGGIHVWHMPALTEIFGDDSVLQFGGGTLGHPWGNAPGAVANRVALEACVQARNEGRDLAREGNEIIREASKWSPELAAACEVWKAIKFDSNQ.

The propeptide occupies 1-2 (MS). An N-acetylproline modification is found at proline 3. Lysine 14 is subject to N6,N6,N6-trimethyllysine. Residues asparagine 123 and threonine 173 each contribute to the substrate site. Lysine 175 serves as the catalytic Proton acceptor. Lysine 177 contributes to the substrate binding site. Residues lysine 201, aspartate 203, and glutamate 204 each coordinate Mg(2+). Lysine 201 bears the N6-carboxylysine mark. Histidine 294 functions as the Proton acceptor in the catalytic mechanism. Positions 295, 327, and 379 each coordinate substrate.

This sequence belongs to the RuBisCO large chain family. Type I subfamily. As to quaternary structure, heterohexadecamer of 8 large chains and 8 small chains; disulfide-linked. The disulfide link is formed within the large subunit homodimers. Mg(2+) serves as cofactor. The disulfide bond which can form in the large chain dimeric partners within the hexadecamer appears to be associated with oxidative stress and protein turnover.

It localises to the plastid. The protein localises to the chloroplast. It carries out the reaction 2 (2R)-3-phosphoglycerate + 2 H(+) = D-ribulose 1,5-bisphosphate + CO2 + H2O. The enzyme catalyses D-ribulose 1,5-bisphosphate + O2 = 2-phosphoglycolate + (2R)-3-phosphoglycerate + 2 H(+). RuBisCO catalyzes two reactions: the carboxylation of D-ribulose 1,5-bisphosphate, the primary event in carbon dioxide fixation, as well as the oxidative fragmentation of the pentose substrate in the photorespiration process. Both reactions occur simultaneously and in competition at the same active site. The chain is Ribulose bisphosphate carboxylase large chain from Drymophloeus subdistichus (Palm tree).